The chain runs to 296 residues: Probable GTP 3',8-cyclase (296 aa).

Residues Glu-5–Lys-230 enclose the Radical SAM core domain. Arg-14 contributes to the GTP binding site. 2 residues coordinate [4Fe-4S] cluster: Cys-21 and Cys-25. Position 27 (Tyr-27) interacts with S-adenosyl-L-methionine. Cys-28 lines the [4Fe-4S] cluster pocket. GTP is bound at residue Lys-61. Gly-65 lines the S-adenosyl-L-methionine pocket. Thr-89 lines the GTP pocket. Ser-113 provides a ligand contact to S-adenosyl-L-methionine. Lys-150 contributes to the GTP binding site. Residues Cys-245 and Cys-248 each coordinate [4Fe-4S] cluster. Residue Arg-250–Arg-252 coordinates GTP. Position 262 (Cys-262) interacts with [4Fe-4S] cluster.

It belongs to the radical SAM superfamily. MoaA family. [4Fe-4S] cluster is required as a cofactor.

It catalyses the reaction GTP + AH2 + S-adenosyl-L-methionine = (8S)-3',8-cyclo-7,8-dihydroguanosine 5'-triphosphate + 5'-deoxyadenosine + L-methionine + A + H(+). It functions in the pathway cofactor biosynthesis; molybdopterin biosynthesis. Catalyzes the cyclization of GTP to (8S)-3',8-cyclo-7,8-dihydroguanosine 5'-triphosphate. The polypeptide is Probable GTP 3',8-cyclase (Archaeoglobus fulgidus (strain ATCC 49558 / DSM 4304 / JCM 9628 / NBRC 100126 / VC-16)).